Here is a 474-residue protein sequence, read N- to C-terminus: Bifunctional protein HldE (474 aa).

The segment at 1 to 318 is ribokinase; the sequence is MKLSMPRFDQ…RAVQREQGSE (318 aa). 194-197 is an ATP binding site; the sequence is NLSE. Asp-263 is an active-site residue. The tract at residues 343 to 474 is cytidylyltransferase; the sequence is FTNGCFDILH…AIVEKIRQKG (132 aa).

The protein in the N-terminal section; belongs to the carbohydrate kinase PfkB family. This sequence in the C-terminal section; belongs to the cytidylyltransferase family. Homodimer.

It catalyses the reaction D-glycero-beta-D-manno-heptose 7-phosphate + ATP = D-glycero-beta-D-manno-heptose 1,7-bisphosphate + ADP + H(+). The catalysed reaction is D-glycero-beta-D-manno-heptose 1-phosphate + ATP + H(+) = ADP-D-glycero-beta-D-manno-heptose + diphosphate. The protein operates within nucleotide-sugar biosynthesis; ADP-L-glycero-beta-D-manno-heptose biosynthesis; ADP-L-glycero-beta-D-manno-heptose from D-glycero-beta-D-manno-heptose 7-phosphate: step 1/4. It participates in nucleotide-sugar biosynthesis; ADP-L-glycero-beta-D-manno-heptose biosynthesis; ADP-L-glycero-beta-D-manno-heptose from D-glycero-beta-D-manno-heptose 7-phosphate: step 3/4. Catalyzes the phosphorylation of D-glycero-D-manno-heptose 7-phosphate at the C-1 position to selectively form D-glycero-beta-D-manno-heptose-1,7-bisphosphate. Its function is as follows. Catalyzes the ADP transfer from ATP to D-glycero-beta-D-manno-heptose 1-phosphate, yielding ADP-D-glycero-beta-D-manno-heptose. This is Bifunctional protein HldE from Pseudomonas aeruginosa (strain UCBPP-PA14).